A 124-amino-acid polypeptide reads, in one-letter code: Small ribosomal subunit protein bS6 (124 aa).

The protein belongs to the bacterial ribosomal protein bS6 family.

Binds together with bS18 to 16S ribosomal RNA. This is Small ribosomal subunit protein bS6 from Actinobacillus pleuropneumoniae serotype 7 (strain AP76).